The chain runs to 545 residues: Chaperonin GroEL 3 (545 aa).

Residues Thr30–Pro33, Lys51, Asp87–Thr91, Gly415, and Asp496 contribute to the ATP site.

The protein belongs to the chaperonin (HSP60) family. Forms a cylinder of 14 subunits composed of two heptameric rings stacked back-to-back. Interacts with the co-chaperonin GroES.

It localises to the cytoplasm. The enzyme catalyses ATP + H2O + a folded polypeptide = ADP + phosphate + an unfolded polypeptide.. In terms of biological role, together with its co-chaperonin GroES, plays an essential role in assisting protein folding. The GroEL-GroES system forms a nano-cage that allows encapsulation of the non-native substrate proteins and provides a physical environment optimized to promote and accelerate protein folding. This is Chaperonin GroEL 3 from Nitrobacter hamburgensis (strain DSM 10229 / NCIMB 13809 / X14).